Reading from the N-terminus, the 297-residue chain is Glucose-6-phosphate 1-epimerase (297 aa).

Substrate is bound by residues Arg57, Gln81, and Arg86. Ser88 carries the phosphoserine modification. The active site involves His159. A substrate-binding site is contributed by Asp203. Residue Glu264 is part of the active site.

This sequence belongs to the glucose-6-phosphate 1-epimerase family.

The catalysed reaction is alpha-D-glucose 6-phosphate = beta-D-glucose 6-phosphate. Catalyzes the interconversion between the alpha and beta anomers from at least three hexose 6-phosphate sugars (Glc6P, Gal6P, and Man6P). In Saccharomyces cerevisiae (strain ATCC 204508 / S288c) (Baker's yeast), this protein is Glucose-6-phosphate 1-epimerase.